The chain runs to 146 residues: 3-dehydroquinate dehydratase (146 aa).

The Proton acceptor role is filled by Y23. Residues N75, H81, and D88 each contribute to the substrate site. The active-site Proton donor is the H101. Substrate contacts are provided by residues 102 to 103 (LS) and R112.

This sequence belongs to the type-II 3-dehydroquinase family. In terms of assembly, homododecamer.

The catalysed reaction is 3-dehydroquinate = 3-dehydroshikimate + H2O. It functions in the pathway metabolic intermediate biosynthesis; chorismate biosynthesis; chorismate from D-erythrose 4-phosphate and phosphoenolpyruvate: step 3/7. Catalyzes a trans-dehydration via an enolate intermediate. In Marinobacter nauticus (strain ATCC 700491 / DSM 11845 / VT8) (Marinobacter aquaeolei), this protein is 3-dehydroquinate dehydratase.